We begin with the raw amino-acid sequence, 207 residues long: MSTIIMDLCSYTRLGLTGYLLSRGVKKREINDIETVDDLAIACDSQRPSVVFINEDCFIHDASNSQRIKLIINQHPNTLFIVFMAIANVHFDEYLLVRKNLLISSKSIKPESLDDILGDILKKETTITSFLNMPTLSLSRTESSMLRMWMAGQGTIQISDQMNIKAKTVSSHKGNIKRKIKTHNKQVIYHVVRLTDNVTNGIFVNMR.

Residues 131–196 enclose the HTH luxR-type domain; it reads LNMPTLSLSR…VIYHVVRLTD (66 aa). Positions 155–174 form a DNA-binding region, H-T-H motif; it reads TIQISDQMNIKAKTVSSHKG.

It belongs to the RcsA family. Interacts with RcsB.

Its function is as follows. Component of the Rcs signaling system, which controls transcription of numerous genes. Binds, with RcsB, to the RcsAB box to regulate expression of genes. This chain is Transcriptional regulatory protein RcsA, found in Escherichia coli O157:H7.